The chain runs to 1318 residues: Maestro heat-like repeat family member 5 (1318 aa).

The disordered stretch occupies residues 1–38; sequence MDRQCSERPYSCTPTGRVSSAVSQNSRISPPVSTSMKD. Residues 12–38 show a composition bias toward polar residues; that stretch reads CTPTGRVSSAVSQNSRISPPVSTSMKD. The stretch at 581–618 is one HEAT 1 repeat; it reads DELHFLLSHLYIWLASEKAHERQRAVHSCMILLKFLNH. The segment at 676–695 is disordered; it reads ESQAPKELSQAHSDGAPLWN. HEAT repeat units follow at residues 769 to 811, 840 to 880, 996 to 1033, 1037 to 1074, 1076 to 1113, 1118 to 1155, 1164 to 1200, and 1278 to 1315; these read GAKL…SHTC, PTSH…LLAA, RQIP…SPVL, LPKQ…HPDK, SLLQ…RLGA, SQSL…AMAD, QVHQ…LLRW, and VDTN…VSAR.

In Homo sapiens (Human), this protein is Maestro heat-like repeat family member 5 (MROH5).